Consider the following 143-residue polypeptide: CRISPR-associated endoribonuclease Cas2 (143 aa).

D14 serves as a coordination point for Mg(2+).

Belongs to the CRISPR-associated endoribonuclease Cas2 protein family. As to quaternary structure, homodimer, forms a heterotetramer with a Cas1 homodimer. Mg(2+) serves as cofactor.

Its function is as follows. CRISPR (clustered regularly interspaced short palindromic repeat), is an adaptive immune system that provides protection against mobile genetic elements (viruses, transposable elements and conjugative plasmids). CRISPR clusters contain sequences complementary to antecedent mobile elements and target invading nucleic acids. CRISPR clusters are transcribed and processed into CRISPR RNA (crRNA). Functions as a ssRNA-specific endoribonuclease. Involved in the integration of spacer DNA into the CRISPR cassette. In Campylobacter jejuni subsp. jejuni serotype O:2 (strain ATCC 700819 / NCTC 11168), this protein is CRISPR-associated endoribonuclease Cas2.